The following is a 371-amino-acid chain: Dual-specificity RNA methyltransferase RlmN (371 aa).

The active-site Proton acceptor is Glu97. A Radical SAM core domain is found at 103 to 341 (DGDRATLCVS…VTVRTTRGDD (239 aa)). The cysteines at positions 110 and 346 are disulfide-linked. The [4Fe-4S] cluster site is built by Cys117, Cys121, and Cys124. S-adenosyl-L-methionine-binding positions include 171-172 (GE), Ser203, 225-227 (SLH), and Asn303. Residue Cys346 is the S-methylcysteine intermediate of the active site.

Belongs to the radical SAM superfamily. RlmN family. [4Fe-4S] cluster serves as cofactor.

The protein localises to the cytoplasm. It carries out the reaction adenosine(2503) in 23S rRNA + 2 reduced [2Fe-2S]-[ferredoxin] + 2 S-adenosyl-L-methionine = 2-methyladenosine(2503) in 23S rRNA + 5'-deoxyadenosine + L-methionine + 2 oxidized [2Fe-2S]-[ferredoxin] + S-adenosyl-L-homocysteine. The enzyme catalyses adenosine(37) in tRNA + 2 reduced [2Fe-2S]-[ferredoxin] + 2 S-adenosyl-L-methionine = 2-methyladenosine(37) in tRNA + 5'-deoxyadenosine + L-methionine + 2 oxidized [2Fe-2S]-[ferredoxin] + S-adenosyl-L-homocysteine. Its function is as follows. Specifically methylates position 2 of adenine 2503 in 23S rRNA and position 2 of adenine 37 in tRNAs. m2A2503 modification seems to play a crucial role in the proofreading step occurring at the peptidyl transferase center and thus would serve to optimize ribosomal fidelity. In Marinomonas sp. (strain MWYL1), this protein is Dual-specificity RNA methyltransferase RlmN.